The following is a 177-amino-acid chain: F(420)H(2) dehydrogenase subunit I (177 aa).

The tract at residues 1 to 21 (MGCPEVQDRPGSGYELEETPA) is disordered. 4Fe-4S ferredoxin-type domains follow at residues 76 to 105 (GLQT…IVKA) and 116 to 145 (WFPQ…SGKE). The [4Fe-4S] cluster site is built by Cys85, Cys88, Cys91, Cys95, Cys125, Cys128, Cys131, and Cys135.

Belongs to the complex I 23 kDa subunit family. In terms of assembly, the FPO complex is composed of at least 13 different subunits. It depends on [4Fe-4S] cluster as a cofactor.

It carries out the reaction methanophenazine + reduced coenzyme F420-(gamma-L-Glu)(n) = dihydromethanophenazine + oxidized coenzyme F420-(gamma-L-Glu)(n) + H(+). Its function is as follows. Component of the F(420)H(2) dehydrogenase (FPO complex) which is part of the energy-conserving F(420)H(2):heterodisulfide oxidoreductase system. The membrane-bound electron transfer system of the complex plays an important role in the metabolism of methylotrophic methanogens when the organisms grow on methanol or methylamines. Catalyzes the oxidation of methanophenazine to dihydromethanophenazine. It shuttles electrons from F(420)H(2), via FAD and iron-sulfur (Fe-S) centers, to methanophenazine (an electron carrier in the membrane). It couples the redox reaction to proton translocation (for every two electrons transferred, two hydrogen ions are translocated across the cytoplasmic membrane), and thus conserves the redox energy in a proton gradient. It also catalyzes the oxidation of F(420)H(2) with quinones such as 2,3-dimethyl-1,4-naphthoquinone, 2-methyl-1,4-naphthoquinone and tetramethyl-p-benzoquinone. The protein is F(420)H(2) dehydrogenase subunit I (fpoI) of Methanosarcina mazei (strain ATCC BAA-159 / DSM 3647 / Goe1 / Go1 / JCM 11833 / OCM 88) (Methanosarcina frisia).